Here is a 314-residue protein sequence, read N- to C-terminus: DNA-directed RNA polymerase subunit alpha (314 aa).

Residues 1 to 228 (MIEIEKPVIE…EHLNIFVGLT (228 aa)) form an alpha N-terminal domain (alpha-NTD) region. Residues 245–314 (KEKVLEMTIE…ELGLGLRKEE (70 aa)) form an alpha C-terminal domain (alpha-CTD) region.

Belongs to the RNA polymerase alpha chain family. Homodimer. The RNAP catalytic core consists of 2 alpha, 1 beta, 1 beta' and 1 omega subunit. When a sigma factor is associated with the core the holoenzyme is formed, which can initiate transcription.

The enzyme catalyses RNA(n) + a ribonucleoside 5'-triphosphate = RNA(n+1) + diphosphate. DNA-dependent RNA polymerase catalyzes the transcription of DNA into RNA using the four ribonucleoside triphosphates as substrates. The polypeptide is DNA-directed RNA polymerase subunit alpha (Halalkalibacterium halodurans (strain ATCC BAA-125 / DSM 18197 / FERM 7344 / JCM 9153 / C-125) (Bacillus halodurans)).